The primary structure comprises 527 residues: Probable bifunctional tRNA threonylcarbamoyladenosine biosynthesis protein (527 aa).

Residues 1–323 (MPDIMPDDGL…YRADEVEVAW (323 aa)) form a kae1 region. The Fe cation site is built by H110, H114, and Y131. Residues 131-135 (YASGA), D163, G176, E180, and N256 each bind L-threonylcarbamoyladenylate. A Fe cation-binding site is contributed by D284. The 195-residue stretch at 333-527 (IGPHEGGVAR…HEVELRGRYL (195 aa)) folds into the Protein kinase domain. ATP-binding positions include 340–348 (VARGAEAVV) and K357. Catalysis depends on D444, which acts as the Proton acceptor; for kinase activity.

This sequence in the N-terminal section; belongs to the KAE1 / TsaD family. The protein in the C-terminal section; belongs to the protein kinase superfamily. Tyr protein kinase family. BUD32 subfamily. Component of the KEOPS complex that consists of Kae1, Bud32, Cgi121 and Pcc1; the whole complex dimerizes. Fe(2+) serves as cofactor.

It localises to the cytoplasm. The enzyme catalyses L-seryl-[protein] + ATP = O-phospho-L-seryl-[protein] + ADP + H(+). It carries out the reaction L-threonyl-[protein] + ATP = O-phospho-L-threonyl-[protein] + ADP + H(+). The catalysed reaction is L-threonylcarbamoyladenylate + adenosine(37) in tRNA = N(6)-L-threonylcarbamoyladenosine(37) in tRNA + AMP + H(+). Its function is as follows. Required for the formation of a threonylcarbamoyl group on adenosine at position 37 (t(6)A37) in tRNAs that read codons beginning with adenine. Is a component of the KEOPS complex that is probably involved in the transfer of the threonylcarbamoyl moiety of threonylcarbamoyl-AMP (TC-AMP) to the N6 group of A37. The Kae1 domain likely plays a direct catalytic role in this reaction. The Bud32 domain probably displays kinase activity that regulates Kae1 function. The sequence is that of Probable bifunctional tRNA threonylcarbamoyladenosine biosynthesis protein from Methanoculleus marisnigri (strain ATCC 35101 / DSM 1498 / JR1).